The primary structure comprises 539 residues: Protein Wnt-4 (539 aa).

The signal sequence occupies residues 1–21; it reads MPSPTGVFVLMILTHLSFGLG. Residues 34–77 are disordered; it reads QNGDLDSSNPAIHHQQHQQHQQHQQHQQHQSNHNLNNGNMNSTI. Positions 51-74 are enriched in low complexity; that stretch reads QQHQQHQQHQQHQSNHNLNNGNMN. Residues Asn-74 and Asn-284 are each glycosylated (N-linked (GlcNAc...) asparagine). 5 disulfides stabilise this stretch: Cys-274–Cys-285, Cys-322–Cys-330, Cys-332–Cys-349, Cys-397–Cys-411, and Cys-399–Cys-406. A lipid anchor (O-palmitoleoyl serine; by PORCN) is attached at Ser-403. Asn-419 carries an N-linked (GlcNAc...) asparagine glycan. A disordered region spans residues 436–463; it reads APNQRSMRQVSSSRMKKPKQRRKKPQQS. Residues 439 to 448 are compositionally biased toward low complexity; it reads QRSMRQVSSS. The segment covering 449–460 has biased composition (basic residues); the sequence is RMKKPKQRRKKP. Intrachain disulfides connect Cys-478/Cys-497, Cys-486/Cys-492, Cys-496/Cys-538, Cys-512/Cys-529, Cys-514/Cys-526, and Cys-521/Cys-522.

This sequence belongs to the Wnt family. Palmitoleoylated by porcupine. The lipid group functions as a sorting signal, targeting the ligand to polarized vesicles that transport Wnt4 to unique sites at the cell surface. Depalmitoleoylated by notum, leading to inhibit Wnt signaling pathway.

Its subcellular location is the secreted. It localises to the extracellular space. The protein localises to the extracellular matrix. Binds as a ligand to a family of frizzled seven-transmembrane receptors and acts through a cascade of genes on the nucleus. Acts downstream of homeotic complex genes in the visceral mesoderm and is required for embryonic segmentation. Also required for cell movement and FAK regulation during ovarian morphogenesis. The protein is Protein Wnt-4 (Wnt4) of Drosophila melanogaster (Fruit fly).